The following is a 127-amino-acid chain: Fluoride-specific ion channel FluC (127 aa).

The next 4 helical transmembrane spans lie at 4 to 24 (LSVLGFIALGGAFGACSRYLI), 38 to 58 (YGTLTVNVVGSFIMGLLIAAF), 71 to 91 (IIGLGFLGALTTFSTFSMDNV), and 104 to 124 (LNVLLNVVLSISAAWIGFQLL). The Na(+) site is built by G78 and T81.

It belongs to the fluoride channel Fluc/FEX (TC 1.A.43) family.

The protein localises to the cell inner membrane. The enzyme catalyses fluoride(in) = fluoride(out). With respect to regulation, na(+) is not transported, but it plays an essential structural role and its presence is essential for fluoride channel function. In terms of biological role, fluoride-specific ion channel. Important for reducing fluoride concentration in the cell, thus reducing its toxicity. The protein is Fluoride-specific ion channel FluC of Vibrio campbellii (strain ATCC BAA-1116).